An 838-amino-acid chain; its full sequence is Protein translocase subunit SecA 1 (838 aa).

Residues Q85, 103-107, and D493 each bind ATP; that span reads GEGKT. Zn(2+) is bound by residues C823, C825, C834, and H835.

This sequence belongs to the SecA family. Monomer and homodimer. Part of the essential Sec protein translocation apparatus which comprises SecA, SecYEG and auxiliary proteins SecDF. Other proteins may also be involved. Zn(2+) is required as a cofactor.

It is found in the cell membrane. It localises to the cytoplasm. The enzyme catalyses ATP + H2O + cellular proteinSide 1 = ADP + phosphate + cellular proteinSide 2.. In terms of biological role, part of the Sec protein translocase complex. Interacts with the SecYEG preprotein conducting channel. Has a central role in coupling the hydrolysis of ATP to the transfer of proteins into and across the cell membrane, serving as an ATP-driven molecular motor driving the stepwise translocation of polypeptide chains across the membrane. The sequence is that of Protein translocase subunit SecA 1 from Streptococcus gordonii.